The primary structure comprises 309 residues: HPr kinase/phosphorylase (309 aa).

Active-site residues include histidine 138 and lysine 159. ATP is bound at residue 153–160 (GQSGVGKS). Serine 160 provides a ligand contact to Mg(2+). Aspartate 177 acts as the Proton acceptor; for phosphorylation activity. Proton donor; for dephosphorylation activity in catalysis. The important for the catalytic mechanism of both phosphorylation and dephosphorylation stretch occupies residues 201-210 (LEIRGLGIIN). Residue glutamate 202 coordinates Mg(2+). Arginine 243 is an active-site residue. Positions 264-269 (PVRPGR) are important for the catalytic mechanism of dephosphorylation.

The protein belongs to the HPrK/P family. As to quaternary structure, homohexamer. Mg(2+) serves as cofactor.

The enzyme catalyses [HPr protein]-L-serine + ATP = [HPr protein]-O-phospho-L-serine + ADP + H(+). It catalyses the reaction [HPr protein]-O-phospho-L-serine + phosphate + H(+) = [HPr protein]-L-serine + diphosphate. Catalyzes the ATP- as well as the pyrophosphate-dependent phosphorylation of a specific serine residue in HPr, a phosphocarrier protein of the phosphoenolpyruvate-dependent sugar phosphotransferase system (PTS). HprK/P also catalyzes the pyrophosphate-producing, inorganic phosphate-dependent dephosphorylation (phosphorolysis) of seryl-phosphorylated HPr (P-Ser-HPr). The two antagonistic activities of HprK/P are regulated by several intracellular metabolites, which change their concentration in response to the absence or presence of rapidly metabolisable carbon sources (glucose, fructose, etc.) in the growth medium. Also phosphorylates/dephosphorylates the HPr-like catabolite repression protein crh on a specific serine residue. Therefore, by controlling the phosphorylation state of HPr and crh, HPrK/P is a sensor enzyme that plays a major role in the regulation of carbon metabolism and sugar transport: it mediates carbon catabolite repression (CCR), and regulates PTS-catalyzed carbohydrate uptake and inducer exclusion. The protein is HPr kinase/phosphorylase of Bacillus anthracis (strain A0248).